The sequence spans 104 residues: UPF0473 protein LGAS_0424 (104 aa).

It belongs to the UPF0473 family.

This Lactobacillus gasseri (strain ATCC 33323 / DSM 20243 / BCRC 14619 / CIP 102991 / JCM 1131 / KCTC 3163 / NCIMB 11718 / NCTC 13722 / AM63) protein is UPF0473 protein LGAS_0424.